A 529-amino-acid polypeptide reads, in one-letter code: Peptide chain release factor 3 (529 aa).

The 270-residue stretch at 11-280 (NKRRTFAIIS…GLVKWAPAPM (270 aa)) folds into the tr-type G domain. GTP contacts are provided by residues 20–27 (SHPDAGKT), 88–92 (DTPGH), and 142–145 (NKLD).

The protein belongs to the TRAFAC class translation factor GTPase superfamily. Classic translation factor GTPase family. PrfC subfamily.

It localises to the cytoplasm. Its function is as follows. Increases the formation of ribosomal termination complexes and stimulates activities of RF-1 and RF-2. It binds guanine nucleotides and has strong preference for UGA stop codons. It may interact directly with the ribosome. The stimulation of RF-1 and RF-2 is significantly reduced by GTP and GDP, but not by GMP. The sequence is that of Peptide chain release factor 3 from Proteus mirabilis (strain HI4320).